Consider the following 437-residue polypeptide: Glutamate-1-semialdehyde 2,1-aminomutase 1 (437 aa).

An N6-(pyridoxal phosphate)lysine modification is found at K268.

The protein belongs to the class-III pyridoxal-phosphate-dependent aminotransferase family. HemL subfamily. In terms of assembly, homodimer. Requires pyridoxal 5'-phosphate as cofactor.

The protein resides in the cytoplasm. The catalysed reaction is (S)-4-amino-5-oxopentanoate = 5-aminolevulinate. The protein operates within porphyrin-containing compound metabolism; protoporphyrin-IX biosynthesis; 5-aminolevulinate from L-glutamyl-tRNA(Glu): step 2/2. The chain is Glutamate-1-semialdehyde 2,1-aminomutase 1 from Halalkalibacterium halodurans (strain ATCC BAA-125 / DSM 18197 / FERM 7344 / JCM 9153 / C-125) (Bacillus halodurans).